The sequence spans 391 residues: Small ribosomal subunit protein bS1 (391 aa).

4 consecutive S1 motif domains span residues 16–90, 108–173, 194–262, and 279–348; these read GDKV…LSRR, NEII…LSRK, GDVI…LSIK, and NDDI…LSIK. The interval 356–381 is disordered; it reads VVESDPSTTKAYLESEEEDNPTIGDM.

It belongs to the bacterial ribosomal protein bS1 family.

Its function is as follows. Binds mRNA; thus facilitating recognition of the initiation point. It is needed to translate mRNA with a short Shine-Dalgarno (SD) purine-rich sequence. In Staphylococcus aureus (strain MRSA252), this protein is Small ribosomal subunit protein bS1 (rpsA).